A 1245-amino-acid polypeptide reads, in one-letter code: Prospore membrane adapter protein SPO71 (1245 aa).

A disordered region spans residues 207–270 (LHEEDQENTN…DFNYNREPSE (64 aa)). A compositionally biased stretch (basic and acidic residues) spans 227 to 247 (KRKDLGESKSISRKDYSHFDR). A PxP motif is present at residues 385–399 (INILPPWPTELTEEE). The PH domain occupies 1030–1229 (LIQKGPLYQK…WVMSIYYELE (200 aa)). The disordered stretch occupies residues 1154–1192 (KKGNEKQYTQDYGRQDNNIDPPSAPEADLNNSNVPSNTD). Polar residues-rich tracts occupy residues 1159 to 1173 (KQYT…NNID) and 1182 to 1191 (LNNSNVPSNT).

Belongs to the SPO71 family. In terms of assembly, interacts (via PxP motif) with VPS13 (via SHR-BD domain); during prospore membrane formation.

Its subcellular location is the prospore membrane. Functionally, recruits the lipid transfer protein VPS13 to the prospore membrane during sporulation, thereby aiding prospore membrane formation. This is Prospore membrane adapter protein SPO71 (SPO71) from Saccharomyces cerevisiae (strain ATCC 204508 / S288c) (Baker's yeast).